A 162-amino-acid chain; its full sequence is Caveolin-2 (162 aa).

Topologically, residues 1–86 (MGLETEKADV…FEISKYVMYK (86 aa)) are cytoplasmic. Phosphotyrosine; by SRC is present on Tyr-19. 2 positions are modified to phosphoserine: Ser-20 and Ser-23. Tyr-27 carries the phosphotyrosine; by SRC modification. A Phosphoserine modification is found at Ser-36. The helical intramembrane region spans 87–107 (FLTVFLAIPLAFIAGILFATL). The Cytoplasmic portion of the chain corresponds to 108-162 (SCLHIWILMPFVKTCLMVLPSVQTIWKSVTDVIIAPLCTSVGRCFSSVSLQLSQD).

The protein belongs to the caveolin family. Monomer or homodimer. Interacts with CAV1; the interaction forms a stable heterooligomeric complex that is required for targeting to lipid rafts and for caveolae formation. Tyrosine phosphorylated forms do not form heterooligomers with the Tyr-19-phosphorylated form existing as a monomer or dimer, and the Tyr-27-form as a monomer only. Interacts (tyrosine phosphorylated form) with the SH2 domain-containing proteins, RASA1, NCK1 and SRC. Interacts (tyrosine phosphorylated form) with INSR, the interaction (Tyr-27-phosphorylated form) is increased on insulin stimulation. Interacts (Tyr-19 phosphorylated form) with MAPK1 (phosphorylated form); the interaction, promoted by insulin, leads to nuclear location and MAPK1 activation. Interacts with STAT3; the interaction is increased on insulin-induced tyrosine phosphorylation leading to STAT activation. In terms of processing, phosphorylated on serine and tyrosine residues. CAV1 promotes phosphorylation on Ser-23 which then targets the complex to the plasma membrane, lipid rafts and caveolae. Phosphorylation on Ser-36 appears to modulate mitosis in endothelial cells. Phosphorylation on both Tyr-19 and Tyr-27 is required for insulin-induced 'Ser-727' phosphorylation of STAT3 and its activation. Phosphorylation on Tyr-19 is required for insulin-induced phosphorylation of MAPK1 and DNA binding of STAT3. Tyrosine phosphorylation is induced by both EGF and insulin (By. similarity).

It is found in the nucleus. The protein resides in the cytoplasm. Its subcellular location is the golgi apparatus membrane. The protein localises to the cell membrane. It localises to the membrane. It is found in the caveola. In terms of biological role, may act as a scaffolding protein within caveolar membranes. Interacts directly with G-protein alpha subunits and can functionally regulate their activity. Acts as an accessory protein in conjunction with CAV1 in targeting to lipid rafts and driving caveolae formation. The Ser-36 phosphorylated form has a role in modulating mitosis in endothelial cells. Positive regulator of cellular mitogenesis of the MAPK signaling pathway. Required for the insulin-stimulated nuclear translocation and activation of MAPK1 and STAT3, and the subsequent regulation of cell cycle progression. This is Caveolin-2 (CAV2) from Gorilla gorilla gorilla (Western lowland gorilla).